Here is a 919-residue protein sequence, read N- to C-terminus: Alanine--tRNA ligase (919 aa).

Zn(2+) contacts are provided by His-565, His-569, Cys-667, and His-671.

It belongs to the class-II aminoacyl-tRNA synthetase family. Zn(2+) is required as a cofactor.

It localises to the cytoplasm. The catalysed reaction is tRNA(Ala) + L-alanine + ATP = L-alanyl-tRNA(Ala) + AMP + diphosphate. Its function is as follows. Catalyzes the attachment of alanine to tRNA(Ala) in a two-step reaction: alanine is first activated by ATP to form Ala-AMP and then transferred to the acceptor end of tRNA(Ala). Also edits incorrectly charged Ser-tRNA(Ala) and Gly-tRNA(Ala) via its editing domain. This is Alanine--tRNA ligase from Leptospira biflexa serovar Patoc (strain Patoc 1 / Ames).